The primary structure comprises 434 residues: Ribosomal protein uS12 methylthiotransferase RimO (434 aa).

The 111-residue stretch at 2–112 folds into the MTTase N-terminal domain; that stretch reads AKIGFVSLGC…VLEAVQEVLP (111 aa). [4Fe-4S] cluster-binding residues include cysteine 11, cysteine 47, cysteine 76, cysteine 142, cysteine 146, and cysteine 149. The 238-residue stretch at 128–365 folds into the Radical SAM core domain; that stretch reads LTPRHYAYVK…LEVQARVSLR (238 aa). One can recognise a TRAM domain in the interval 368–434; that stretch reads QRFVGKTLEV…DTYDLHGVQA (67 aa).

The protein belongs to the methylthiotransferase family. RimO subfamily. It depends on [4Fe-4S] cluster as a cofactor.

It is found in the cytoplasm. The catalysed reaction is L-aspartate(89)-[ribosomal protein uS12]-hydrogen + (sulfur carrier)-SH + AH2 + 2 S-adenosyl-L-methionine = 3-methylsulfanyl-L-aspartate(89)-[ribosomal protein uS12]-hydrogen + (sulfur carrier)-H + 5'-deoxyadenosine + L-methionine + A + S-adenosyl-L-homocysteine + 2 H(+). Functionally, catalyzes the methylthiolation of an aspartic acid residue of ribosomal protein uS12. The sequence is that of Ribosomal protein uS12 methylthiotransferase RimO from Thermus thermophilus (strain ATCC BAA-163 / DSM 7039 / HB27).